Consider the following 77-residue polypeptide: VpAmp2.0 (77 aa).

The signal sequence occupies residues 1-23 (MQLRKALLVIFVAYLLVTDEAEA). Positions 49–77 (RKREIEDLFDPYQKDLDLQRLDRFFSQFQ) are excised as a propeptide.

It belongs to the non-disulfide-bridged peptide (NDBP) superfamily. Medium-length antimicrobial peptide (group 3) family. As to expression, expressed by the venom gland.

It is found in the secreted. The protein localises to the target cell membrane. Functionally, antimicrobial peptide with potent activity against Gram-positive bacteria S.aureus (MIC=10 uM) and S.agalactiaea (MIC=15 uM), and Gram-negative bacteria E.coli (MIC=24 uM) and P.aeruginosa (MIC=15 uM), as well as against yeasts Candida albicans (MIC=3.1 uM) and C.glabrata (MIC=25 uM). Also elicits low hemolysis on human erythrocytes (HC(50)=167 uM). The protein is VpAmp2.0 of Mesomexovis punctatus (Scorpion).